The primary structure comprises 208 residues: Interleukin-6 (208 aa).

The signal sequence occupies residues 1–29 (MNSRFTSAFTPFAVSLGLLLVMTSAFPTP). A glycan (N-linked (GlcNAc...) asparagine) is linked at Asn38. A disulfide bridge connects residues Cys72 and Cys78. The residue at position 81 (Ser81) is a Phosphoserine. Cys101 and Cys111 are oxidised to a cystine.

This sequence belongs to the IL-6 superfamily. In terms of assembly, component of a hexamer of two molecules each of IL6, IL6R and IL6ST; first binds to IL6R to associate with the signaling subunit IL6ST. Interacts with IL6R (via the N-terminal ectodomain); this interaction may be affected by IL6R-binding with SORL1, hence decreasing IL6 cis signaling. Interacts with SORL1 (via the N-terminal ectodomain); this interaction leads to IL6 internalization and lysosomal degradation. May form a trimeric complex with the soluble SORL1 ectodomain and soluble IL6R receptor; this interaction might stabilize circulating IL6, hence promoting IL6 trans signaling.

Its subcellular location is the secreted. Cytokine with a wide variety of biological functions in immunity, tissue regeneration, and metabolism. Binds to IL6R, then the complex associates to the signaling subunit IL6ST/gp130 to trigger the intracellular IL6-signaling pathway. The interaction with the membrane-bound IL6R and IL6ST stimulates 'classic signaling', whereas the binding of IL6 and soluble IL6R to IL6ST stimulates 'trans-signaling'. Alternatively, 'cluster signaling' occurs when membrane-bound IL6:IL6R complexes on transmitter cells activate IL6ST receptors on neighboring receiver cells. In terms of biological role, IL6 is a potent inducer of the acute phase response. Rapid production of IL6 contributes to host defense during infection and tissue injury, but excessive IL6 synthesis is involved in disease pathology. In the innate immune response, is synthesized by myeloid cells, such as macrophages and dendritic cells, upon recognition of pathogens through toll-like receptors (TLRs) at the site of infection or tissue injury. In the adaptive immune response, is required for the differentiation of B cells into immunoglobulin-secreting cells. Plays a major role in the differentiation of CD4(+) T cell subsets. Essential factor for the development of T follicular helper (Tfh) cells that are required for the induction of germinal-center formation. Required to drive naive CD4(+) T cells to the Th17 lineage. Also required for proliferation of myeloma cells and the survival of plasmablast cells. Its function is as follows. Acts as an essential factor in bone homeostasis and on vessels directly or indirectly by induction of VEGF, resulting in increased angiogenesis activity and vascular permeability. Induces, through 'trans-signaling' and synergistically with IL1B and TNF, the production of VEGF. Involved in metabolic controls, is discharged into the bloodstream after muscle contraction increasing lipolysis and improving insulin resistance. 'Trans-signaling' in central nervous system also regulates energy and glucose homeostasis. Mediates, through GLP-1, crosstalk between insulin-sensitive tissues, intestinal L cells and pancreatic islets to adapt to changes in insulin demand. Also acts as a myokine. Plays a protective role during liver injury, being required for maintenance of tissue regeneration. Also has a pivotal role in iron metabolism by regulating HAMP/hepcidin expression upon inflammation or bacterial infection. Through activation of IL6ST-YAP-NOTCH pathway, induces inflammation-induced epithelial regeneration. This is Interleukin-6 (IL6) from Bos taurus (Bovine).